The primary structure comprises 89 residues: UPF0297 protein OB2008 (89 aa).

Belongs to the UPF0297 family.

This Oceanobacillus iheyensis (strain DSM 14371 / CIP 107618 / JCM 11309 / KCTC 3954 / HTE831) protein is UPF0297 protein OB2008.